Consider the following 322-residue polypeptide: Tetraacyldisaccharide 4'-kinase (322 aa).

40 to 47 provides a ligand contact to ATP; sequence CVGGTGKT.

Belongs to the LpxK family.

It carries out the reaction a lipid A disaccharide + ATP = a lipid IVA + ADP + H(+). It functions in the pathway glycolipid biosynthesis; lipid IV(A) biosynthesis; lipid IV(A) from (3R)-3-hydroxytetradecanoyl-[acyl-carrier-protein] and UDP-N-acetyl-alpha-D-glucosamine: step 6/6. Transfers the gamma-phosphate of ATP to the 4'-position of a tetraacyldisaccharide 1-phosphate intermediate (termed DS-1-P) to form tetraacyldisaccharide 1,4'-bis-phosphate (lipid IVA). This chain is Tetraacyldisaccharide 4'-kinase, found in Koribacter versatilis (strain Ellin345).